The sequence spans 75 residues: U6-lycotoxin-Ls1d (75 aa).

The N-terminal stretch at 1 to 21 (MKLLLFTALVLVVISLIEVEA) is a signal peptide. The propeptide occupies 22 to 25 (ENER).

It belongs to the neurotoxin 19 (CSTX) family. 06 (U6-Lctx) subfamily. Post-translationally, contains 4 disulfide bonds. Expressed by the venom gland.

It is found in the secreted. The protein is U6-lycotoxin-Ls1d of Lycosa singoriensis (Wolf spider).